Here is a 418-residue protein sequence, read N- to C-terminus: S-adenosylmethionine synthase (418 aa).

Residue H16 coordinates ATP. D18 contributes to the Mg(2+) binding site. E44 lines the K(+) pocket. L-methionine-binding residues include E57 and Q100. The tract at residues Q100 to S110 is flexible loop. ATP contacts are provided by residues D174–K176, D259, R265–K266, A282, and K286. An L-methionine-binding site is contributed by D259. Residue K290 participates in L-methionine binding.

Belongs to the AdoMet synthase family. As to quaternary structure, homotetramer; dimer of dimers. Mg(2+) is required as a cofactor. The cofactor is K(+).

It is found in the cytoplasm. It carries out the reaction L-methionine + ATP + H2O = S-adenosyl-L-methionine + phosphate + diphosphate. The protein operates within amino-acid biosynthesis; S-adenosyl-L-methionine biosynthesis; S-adenosyl-L-methionine from L-methionine: step 1/1. Catalyzes the formation of S-adenosylmethionine (AdoMet) from methionine and ATP. The overall synthetic reaction is composed of two sequential steps, AdoMet formation and the subsequent tripolyphosphate hydrolysis which occurs prior to release of AdoMet from the enzyme. The polypeptide is S-adenosylmethionine synthase (Acaryochloris marina (strain MBIC 11017)).